Consider the following 578-residue polypeptide: XK-related protein 6 (578 aa).

Transmembrane regions (helical) follow at residues 86–106 (WIVL…WLAV), 114–134 (FLWS…VQIL), 253–273 (WLQC…LASY), 307–327 (VLSL…FVVL), 348–368 (WEEV…WFNV), 377–397 (MVAY…LWYA), and 410–430 (LALC…VLYY).

Belongs to the XK family.

The protein localises to the cell membrane. In Tetraodon nigroviridis (Spotted green pufferfish), this protein is XK-related protein 6 (xkr6).